Here is a 581-residue protein sequence, read N- to C-terminus: Frizzled-10 (581 aa).

Positions 1–20 are cleaved as a signal peptide; that stretch reads MQRPGPRLWLVLQVMGSCAA. Topologically, residues 21 to 225 are extracellular; the sequence is ISSMDMERPG…DVYWSREDKR (205 aa). One can recognise an FZ domain in the interval 29–150; that stretch reads PGDGKCQPIE…NDPNYLCMEA (122 aa). 5 cysteine pairs are disulfide-bonded: Cys34–Cys95, Cys42–Cys88, Cys79–Cys117, Cys106–Cys147, and Cys110–Cys134. N-linked (GlcNAc...) asparagine glycosylation is present at Asn48. Asn153 is a glycosylation site (N-linked (GlcNAc...) asparagine). Residues 226–246 form a helical membrane-spanning segment; it reads FAVVWLAIWAVLCFFSSAFTV. Topologically, residues 247–262 are cytoplasmic; it reads LTFLIDPARFRYPERP. Residues 263–283 traverse the membrane as a helical segment; the sequence is IIFLSMCYCVYSVGYLIRLFA. Residues 284 to 311 lie on the Extracellular side of the membrane; that stretch reads GAESIACDRDSGQLYVIQEGLESTGCTL. The chain crosses the membrane as a helical span at residues 312–332; it reads VFLVLYYFGMASSLWWVVLTL. Residues 333–351 are Cytoplasmic-facing; it reads TWFLAAGKKWGHEAIEANS. A helical transmembrane segment spans residues 352-372; it reads SYFHLAAWAIPAVKTILILVM. The Extracellular segment spans residues 373–393; it reads RRVAGDELTGVCYVGSMDVNA. Residues 394 to 414 traverse the membrane as a helical segment; the sequence is LTGFVLIPLACYLVIGTSFIL. Topologically, residues 415 to 443 are cytoplasmic; it reads SGFVALFHIRRVMKTGGENTDKLEKLMVR. The helical transmembrane segment at 444-464 threads the bilayer; the sequence is IGLFSVLYTVPATCVIACYFY. The Extracellular portion of the chain corresponds to 465-502; it reads ERLNMDYWKILAAQHKCKMNNQTKTLDCLMAASIPAVE. Asn485 is a glycosylation site (N-linked (GlcNAc...) asparagine). Residues 503-523 traverse the membrane as a helical segment; that stretch reads IFMVKIFMLLVVGITSGMWIW. Residues 524-581 lie on the Cytoplasmic side of the membrane; sequence TSKTLQSWQQVCSRRLKKKSRRKPASVITSGGIYKKAQHPQKTHHGKYEIPAQSPTCV. The Lys-Thr-X-X-X-Trp motif, mediates interaction with the PDZ domain of Dvl family members signature appears at 526-531; it reads KTLQSW. The tract at residues 560–581 is disordered; sequence AQHPQKTHHGKYEIPAQSPTCV. Residues 579–581 carry the PDZ-binding motif; it reads TCV.

This sequence belongs to the G-protein coupled receptor Fz/Smo family. Interacts with WNT7B. Interacts with MYOC. Post-translationally, ubiquitinated by ZNRF3, leading to its degradation by the proteasome. Highest levels in the placenta and fetal kidney, followed by fetal lung and brain. In adult brain, abundantly expressed in the cerebellum, followed by cerebral cortex, medulla and spinal cord; very low levels in total brain, frontal lobe, temporal lobe and putamen. Weak expression detected in adult brain, heart, lung, skeletal muscle, pancreas, spleen and prostate.

The protein resides in the cell membrane. In terms of biological role, receptor for Wnt proteins. Functions in the canonical Wnt/beta-catenin signaling pathway. The canonical Wnt/beta-catenin signaling pathway leads to the activation of disheveled proteins, inhibition of GSK-3 kinase, nuclear accumulation of beta-catenin and activation of Wnt target genes. A second signaling pathway involving PKC and calcium fluxes has been seen for some family members, but it is not yet clear if it represents a distinct pathway or if it can be integrated in the canonical pathway, as PKC seems to be required for Wnt-mediated inactivation of GSK-3 kinase. Both pathways seem to involve interactions with G-proteins. May be involved in transduction and intercellular transmission of polarity information during tissue morphogenesis and/or in differentiated tissues. The polypeptide is Frizzled-10 (FZD10) (Homo sapiens (Human)).